Reading from the N-terminus, the 192-residue chain is Xanthine phosphoribosyltransferase (192 aa).

L20 and N27 together coordinate xanthine. 128–132 (ANGQA) provides a ligand contact to 5-phospho-alpha-D-ribose 1-diphosphate. K156 is a xanthine binding site.

This sequence belongs to the purine/pyrimidine phosphoribosyltransferase family. Xpt subfamily. In terms of assembly, homodimer.

The protein resides in the cytoplasm. The catalysed reaction is XMP + diphosphate = xanthine + 5-phospho-alpha-D-ribose 1-diphosphate. It functions in the pathway purine metabolism; XMP biosynthesis via salvage pathway; XMP from xanthine: step 1/1. In terms of biological role, converts the preformed base xanthine, a product of nucleic acid breakdown, to xanthosine 5'-monophosphate (XMP), so it can be reused for RNA or DNA synthesis. The chain is Xanthine phosphoribosyltransferase from Listeria innocua serovar 6a (strain ATCC BAA-680 / CLIP 11262).